Here is a 248-residue protein sequence, read N- to C-terminus: Probable phosphatase VCM66_A0854 (248 aa).

Positions 8, 10, 16, 41, 74, 102, 132, 194, and 196 each coordinate Zn(2+).

Belongs to the PHP family. Zn(2+) is required as a cofactor.

This is Probable phosphatase VCM66_A0854 from Vibrio cholerae serotype O1 (strain M66-2).